We begin with the raw amino-acid sequence, 249 residues long: Vacuolar iron transporter homolog 3 (249 aa).

The disordered stretch occupies residues 1–32 (MAMQMNSVVHVSTSPSPSPATSPPPEGKQEHG). The Cytoplasmic portion of the chain corresponds to 1–74 (MAMQMNSVVH…SGRAQWLRAA (74 aa)). The span at 16–26 (SPSPATSPPPE) shows a compositional bias: pro residues. Residues 75 to 95 (VLGANDGLVSVASLMIGVGAV) traverse the membrane as a helical segment. The Vacuolar portion of the chain corresponds to 96–102 (SESGRAM). A helical membrane pass occupies residues 103 to 123 (LVSGVAGLVAGACSMAIGEFV). Residues 124-166 (SVYAQYDIEVAAARRRRRQRRRRCDGDGEEEGSGRLPSPFKAA) are Cytoplasmic-facing. The helical transmembrane segment at 167 to 187 (AASALAFTVGALLPLLAGGFV) threads the bilayer. Topologically, residues 188–193 (RPWAPR) are vacuolar. The chain crosses the membrane as a helical span at residues 194–214 (VAAVCAATSAALAGFGALGAA). At 215-226 (LGGASPARSAAR) the chain is on the cytoplasmic side. A helical transmembrane segment spans residues 227-247 (VLLGGWAAMAACYGVLRLFAN). Over 248–249 (LY) the chain is Vacuolar.

It belongs to the CCC1 family.

It is found in the vacuole membrane. It catalyses the reaction Fe(2+)(in) = Fe(2+)(out). In terms of biological role, probable vacuolar iron transporter that may be involved in the regulation of iron distribution throughout the plant. The chain is Vacuolar iron transporter homolog 3 from Oryza sativa subsp. japonica (Rice).